The sequence spans 208 residues: Ribosomal RNA large subunit methyltransferase E (208 aa).

Residues glycine 62, tryptophan 64, aspartate 82, aspartate 98, and aspartate 123 each coordinate S-adenosyl-L-methionine. Residue lysine 163 is the Proton acceptor of the active site.

Belongs to the class I-like SAM-binding methyltransferase superfamily. RNA methyltransferase RlmE family.

The protein localises to the cytoplasm. It catalyses the reaction uridine(2552) in 23S rRNA + S-adenosyl-L-methionine = 2'-O-methyluridine(2552) in 23S rRNA + S-adenosyl-L-homocysteine + H(+). Specifically methylates the uridine in position 2552 of 23S rRNA at the 2'-O position of the ribose in the fully assembled 50S ribosomal subunit. This chain is Ribosomal RNA large subunit methyltransferase E, found in Idiomarina loihiensis (strain ATCC BAA-735 / DSM 15497 / L2-TR).